The primary structure comprises 291 residues: tRNA dimethylallyltransferase (291 aa).

Position 17–24 (17–24) interacts with ATP; sequence GPTASGKS. 19 to 24 provides a ligand contact to substrate; sequence TASGKS.

The protein belongs to the IPP transferase family. As to quaternary structure, monomer. The cofactor is Mg(2+).

The enzyme catalyses adenosine(37) in tRNA + dimethylallyl diphosphate = N(6)-dimethylallyladenosine(37) in tRNA + diphosphate. Functionally, catalyzes the transfer of a dimethylallyl group onto the adenine at position 37 in tRNAs that read codons beginning with uridine, leading to the formation of N6-(dimethylallyl)adenosine (i(6)A). This is tRNA dimethylallyltransferase from Cereibacter sphaeroides (strain ATCC 17025 / ATH 2.4.3) (Rhodobacter sphaeroides).